Reading from the N-terminus, the 455-residue chain is GTPase Der (455 aa).

EngA-type G domains follow at residues 4–169 (PIVA…PKDQ) and 178–355 (LRVS…GQHQ). GTP contacts are provided by residues 10–17 (GRPNVGKS), 57–61 (DTGGL), 120–123 (NKLE), 184–191 (GRPNVGKS), 233–237 (DTAGI), and 298–301 (NKWD). Residues 356-441 (RRVSTSVLNE…PVRFIFRGKP (86 aa)) enclose the KH-like domain.

This sequence belongs to the TRAFAC class TrmE-Era-EngA-EngB-Septin-like GTPase superfamily. EngA (Der) GTPase family. Associates with the 50S ribosomal subunit.

GTPase that plays an essential role in the late steps of ribosome biogenesis. The protein is GTPase Der of Gloeobacter violaceus (strain ATCC 29082 / PCC 7421).